Here is a 569-residue protein sequence, read N- to C-terminus: Adenine deaminase 1 (569 aa).

Belongs to the metallo-dependent hydrolases superfamily. Adenine deaminase family. Mn(2+) serves as cofactor.

It carries out the reaction adenine + H2O + H(+) = hypoxanthine + NH4(+). The polypeptide is Adenine deaminase 1 (Rhizobium johnstonii (strain DSM 114642 / LMG 32736 / 3841) (Rhizobium leguminosarum bv. viciae)).